The sequence spans 798 residues: Interphotoreceptor matrix proteoglycan 1 (798 aa).

A signal peptide spans 1–20 (MNLEIKHAILVLWIFLQVQG). The N-linked (GlcNAc...) asparagine glycan is linked to asparagine 142. The 123-residue stretch at 238 to 360 (SEEKVEFSIS…PEAYLTAADL (123 aa)) folds into the SEA 1 domain. Threonine 442 and threonine 445 each carry an O-linked (GalNAc...) threonine glycan. Residues 574 to 687 (HELVVFFSLR…YSLDIEPADQ (114 aa)) form the SEA 2 domain. 2 N-linked (GlcNAc...) asparagine glycosylation sites follow: asparagine 595 and asparagine 619. Positions 624 to 632 (KQLEILSFR) match the Heparin- and hyaluronan-binding motif. 2 N-linked (GlcNAc...) asparagine glycosylation sites follow: asparagine 633 and asparagine 651. The disordered stretch occupies residues 741–798 (ASQGQATPCRPPDHSTNQARQPSVKKLQRQQNKVVKKRNSELSATDFEELDDQDWEGN). The span at 786–798 (DFEELDDQDWEGN) shows a compositional bias: acidic residues.

Post-translationally, highly glycosylated (N- and O-linked carbohydrates and sialic acid).

It is found in the cell projection. The protein resides in the cilium. The protein localises to the photoreceptor outer segment. It localises to the secreted. Its subcellular location is the extracellular space. It is found in the extracellular matrix. The protein resides in the interphotoreceptor matrix. The protein localises to the photoreceptor inner segment. Chondroitin sulfate-, heparin- and hyaluronan-binding protein. May serve to form a basic macromolecular scaffold comprising the insoluble interphotoreceptor matrix. The sequence is that of Interphotoreceptor matrix proteoglycan 1 from Rattus norvegicus (Rat).